A 389-amino-acid chain; its full sequence is 8-amino-7-oxononanoate synthase (389 aa).

Arginine 18 is a substrate binding site. 104–105 (GY) is a pyridoxal 5'-phosphate binding site. Histidine 129 is a binding site for substrate. The pyridoxal 5'-phosphate site is built by serine 176, histidine 204, and threonine 232. At lysine 235 the chain carries N6-(pyridoxal phosphate)lysine. Threonine 351 contributes to the substrate binding site.

Belongs to the class-II pyridoxal-phosphate-dependent aminotransferase family. BioF subfamily. As to quaternary structure, homodimer. Pyridoxal 5'-phosphate serves as cofactor.

It catalyses the reaction 6-carboxyhexanoyl-[ACP] + L-alanine + H(+) = (8S)-8-amino-7-oxononanoate + holo-[ACP] + CO2. It functions in the pathway cofactor biosynthesis; biotin biosynthesis. Functionally, catalyzes the decarboxylative condensation of pimeloyl-[acyl-carrier protein] and L-alanine to produce 8-amino-7-oxononanoate (AON), [acyl-carrier protein], and carbon dioxide. The polypeptide is 8-amino-7-oxononanoate synthase (Citrifermentans bemidjiense (strain ATCC BAA-1014 / DSM 16622 / JCM 12645 / Bem) (Geobacter bemidjiensis)).